The chain runs to 727 residues: MPKNSKVTQREHSNEHVTESVADLLALEEPVDYKQSVLNVAGETGGKQKVAEEELDAEDRPAWNSKLQYILAQIGFSVGLGNIWRFPYLCQKNGGGAYLVPYLVLLIIIGIPLFFLELAVGQRIRRGSIGVWHYVCPRLGGIGFSSCIVCLFVGLYYNVIIGWSVFYFFKSFQYPLPWSECPVIRNGTVAVVEPECEKSSATTYFWYREALDISNSISESGGLNWKMTVCLLVAWSIVGMAVVKGIQSSGKVMYFSSLFPYVVLACFLVRGLLLRGAVDGILHMFTPKLDKMLDPQVWREAATQVFFALGLGFGGVIAFSSYNKQDNNCHFDAALVSFINFFTSVLATLVVFAVLGFKANIMNEKCVVENAEKILGYLNSNVLSRDLIPPHVNFSHLTTKDYSEMYNVIMTVKEKQFSALGLDPCLLEDELDKSVQGTGLAFIAFTEAMTHFPASPFWSVMFFLMLINLGLGSMIGTMAGITTPIIDTFKVPKEMFTVGCCVFAFFVGLLFVQRSGNYFVTMFDDYSATLPLTVIVILENIAVAWIYGTKKFMQELTEMLGFRPYRFYFYMWKFVSPLCMAVLTTASIIQLGVSPPGYSAWIKEEAAERYLYFPNWAMALLITLIAVATLPIPVVFILRHFHLLSDGSNTLSVSYKKGRMMKDISNLEENDETRFILSKVPSEAPSPMPTHRSYLGPGSTSPLESSSHPNGRYGSGYLLASTPESEL.

Residues 1 to 68 (MPKNSKVTQR…DRPAWNSKLQ (68 aa)) are Cytoplasmic-facing. A phosphoserine mark is found at serine 13 and serine 20. Residues 69-89 (YILAQIGFSVGLGNIWRFPYL) traverse the membrane as a helical segment. The Extracellular portion of the chain corresponds to 90–96 (CQKNGGG). Residues 97–116 (AYLVPYLVLLIIIGIPLFFL) traverse the membrane as a helical segment. Residues 117–140 (ELAVGQRIRRGSIGVWHYVCPRLG) are Cytoplasmic-facing. Residues 141-161 (GIGFSSCIVCLFVGLYYNVII) traverse the membrane as a helical segment. Over 162 to 224 (GWSVFYFFKS…NSISESGGLN (63 aa)) the chain is Extracellular. N-linked (GlcNAc...) asparagine glycosylation occurs at asparagine 186. A helical membrane pass occupies residues 225-243 (WKMTVCLLVAWSIVGMAVV). At 244-251 (KGIQSSGK) the chain is on the cytoplasmic side. A helical transmembrane segment spans residues 252-269 (VMYFSSLFPYVVLACFLV). Over 270–304 (RGLLLRGAVDGILHMFTPKLDKMLDPQVWREAATQ) the chain is Extracellular. The helical transmembrane segment at 305-322 (VFFALGLGFGGVIAFSSY) threads the bilayer. Residues 323–333 (NKQDNNCHFDA) lie on the Cytoplasmic side of the membrane. A helical transmembrane segment spans residues 334–355 (ALVSFINFFTSVLATLVVFAVL). The Extracellular segment spans residues 356–451 (GFKANIMNEK…FIAFTEAMTH (96 aa)). Phosphotyrosine is present on tyrosine 377. A glycan (N-linked (GlcNAc...) asparagine) is linked at asparagine 393. Residues 452-471 (FPASPFWSVMFFLMLINLGL) traverse the membrane as a helical segment. Over 472–494 (GSMIGTMAGITTPIIDTFKVPKE) the chain is Cytoplasmic. The chain crosses the membrane as a helical span at residues 495 to 513 (MFTVGCCVFAFFVGLLFVQ). The Extracellular portion of the chain corresponds to 514–528 (RSGNYFVTMFDDYSA). A helical membrane pass occupies residues 529–549 (TLPLTVIVILENIAVAWIYGT). The Cytoplasmic segment spans residues 550 to 569 (KKFMQELTEMLGFRPYRFYF). Residues 570–591 (YMWKFVSPLCMAVLTTASIIQL) form a helical membrane-spanning segment. Residues 592-618 (GVSPPGYSAWIKEEAAERYLYFPNWAM) are Extracellular-facing. A helical membrane pass occupies residues 619-641 (ALLITLIAVATLPIPVVFILRHF). Over 642–727 (HLLSDGSNTL…LLASTPESEL (86 aa)) the chain is Cytoplasmic. A phosphoserine mark is found at serine 665 and serine 701. Positions 680-727 (VPSEAPSPMPTHRSYLGPGSTSPLESSSHPNGRYGSGYLLASTPESEL) are disordered. The span at 698-709 (GSTSPLESSSHP) shows a compositional bias: polar residues.

Belongs to the sodium:neurotransmitter symporter (SNF) (TC 2.A.22) family. As to expression, found exclusively in the central nervous system and is more abundant in the cerebellum and the cerebral cortex. Expressed in PC-12 cell line.

The protein resides in the cytoplasmic vesicle. Its subcellular location is the secretory vesicle. It is found in the synaptic vesicle membrane. It localises to the postsynapse. The protein localises to the presynapse. The catalysed reaction is L-proline(in) + Na(+)(in) = L-proline(out) + Na(+)(out). It carries out the reaction L-leucine(in) + Na(+)(in) = L-leucine(out) + Na(+)(out). The enzyme catalyses glycine(in) + Na(+)(in) = glycine(out) + Na(+)(out). It catalyses the reaction L-alanine(in) + Na(+)(in) = L-alanine(out) + Na(+)(out). The catalysed reaction is L-glutamine(in) + Na(+)(in) = L-glutamine(out) + Na(+)(out). Synaptic vesicle transporter with apparent selectivity for neutral amino acids. The transport is sodium-coupled but chloride-independent, likely driven by the proton electrochemical gradient generated by vacuolar H(+)-ATPase in an overall electrogenic mechanism. May contribute to the synaptic uptake of neurotransmitter precursors in a process coupled in part to vesicle exocytosis. The chain is Sodium-dependent neutral amino acid transporter SLC6A17 from Rattus norvegicus (Rat).